A 113-amino-acid chain; its full sequence is Nucleoid-associated protein RHA1_ro04210 (113 aa).

The protein belongs to the YbaB/EbfC family. As to quaternary structure, homodimer.

It is found in the cytoplasm. Its subcellular location is the nucleoid. Binds to DNA and alters its conformation. May be involved in regulation of gene expression, nucleoid organization and DNA protection. This Rhodococcus jostii (strain RHA1) protein is Nucleoid-associated protein RHA1_ro04210.